A 194-amino-acid chain; its full sequence is dCTP deaminase (194 aa).

DCTP contacts are provided by residues 110–115 (RSSLAR), Asp128, 136–138 (VLE), Tyr171, Lys178, and Gln182. Glu138 functions as the Proton donor/acceptor in the catalytic mechanism. A disordered region spans residues 174–194 (RKSSKYKDQQEAVASRISQDK).

The protein belongs to the dCTP deaminase family. Homotrimer.

It carries out the reaction dCTP + H2O + H(+) = dUTP + NH4(+). Its pathway is pyrimidine metabolism; dUMP biosynthesis; dUMP from dCTP (dUTP route): step 1/2. Its function is as follows. Catalyzes the deamination of dCTP to dUTP. The chain is dCTP deaminase from Shewanella frigidimarina (strain NCIMB 400).